A 383-amino-acid chain; its full sequence is Pantothenate kinase 1 (383 aa).

This sequence belongs to the type II pantothenate kinase family. Highly expressed in leaves and developing seeds. Expressed in roots, stems and flowers.

The catalysed reaction is (R)-pantothenate + ATP = (R)-4'-phosphopantothenate + ADP + H(+). Its pathway is cofactor biosynthesis; coenzyme A biosynthesis; CoA from (R)-pantothenate: step 1/5. Its activity is regulated as follows. Regulated by feedback inhibition by malonyl-CoA. Functionally, catalyzes the phosphorylation of pantothenate the first step in CoA biosynthesis. May play a role in the physiological regulation of the intracellular CoA concentration. Functionally redudant with PANK2. In Arabidopsis thaliana (Mouse-ear cress), this protein is Pantothenate kinase 1 (PANK1).